We begin with the raw amino-acid sequence, 234 residues long: 2-C-methyl-D-erythritol 4-phosphate cytidylyltransferase (234 aa).

This sequence belongs to the IspD/TarI cytidylyltransferase family. IspD subfamily.

It catalyses the reaction 2-C-methyl-D-erythritol 4-phosphate + CTP + H(+) = 4-CDP-2-C-methyl-D-erythritol + diphosphate. Its pathway is isoprenoid biosynthesis; isopentenyl diphosphate biosynthesis via DXP pathway; isopentenyl diphosphate from 1-deoxy-D-xylulose 5-phosphate: step 2/6. Its function is as follows. Catalyzes the formation of 4-diphosphocytidyl-2-C-methyl-D-erythritol from CTP and 2-C-methyl-D-erythritol 4-phosphate (MEP). This chain is 2-C-methyl-D-erythritol 4-phosphate cytidylyltransferase, found in Desulforamulus reducens (strain ATCC BAA-1160 / DSM 100696 / MI-1) (Desulfotomaculum reducens).